A 133-amino-acid chain; its full sequence is Phosphoribosyl-AMP cyclohydrolase (133 aa).

Mg(2+) is bound at residue Asp77. Cys78 is a binding site for Zn(2+). Mg(2+) is bound by residues Asp79 and Asp81. The Zn(2+) site is built by Cys95 and Cys102.

The protein belongs to the PRA-CH family. In terms of assembly, homodimer. Requires Mg(2+) as cofactor. Zn(2+) is required as a cofactor.

It is found in the cytoplasm. The catalysed reaction is 1-(5-phospho-beta-D-ribosyl)-5'-AMP + H2O = 1-(5-phospho-beta-D-ribosyl)-5-[(5-phospho-beta-D-ribosylamino)methylideneamino]imidazole-4-carboxamide. Its pathway is amino-acid biosynthesis; L-histidine biosynthesis; L-histidine from 5-phospho-alpha-D-ribose 1-diphosphate: step 3/9. In terms of biological role, catalyzes the hydrolysis of the adenine ring of phosphoribosyl-AMP. In Azotobacter chroococcum mcd 1, this protein is Phosphoribosyl-AMP cyclohydrolase.